A 535-amino-acid polypeptide reads, in one-letter code: Ribonuclease Y (535 aa).

The helical transmembrane segment at 4-24 (IILLIVSALIGLILGYALISI) threads the bilayer. A disordered region spans residues 118-141 (ENLSSKEKVLDSKEQSLTDKSKHI). Residues 225-285 (TITSVHLPDD…IRREIARMTL (61 aa)) enclose the KH domain. The HD domain occupies 351–444 (VLRHSVEVGK…VAAADALSSA (94 aa)).

The protein belongs to the RNase Y family.

The protein localises to the cell membrane. Its function is as follows. Endoribonuclease that initiates mRNA decay. This chain is Ribonuclease Y, found in Streptococcus pyogenes serotype M2 (strain MGAS10270).